The primary structure comprises 273 residues: 6-carboxyhexanoate--CoA ligase (273 aa).

The protein belongs to the BioW family. In terms of assembly, homodimer. Mg(2+) serves as cofactor.

It carries out the reaction heptanedioate + ATP + CoA = 6-carboxyhexanoyl-CoA + AMP + diphosphate. Its pathway is metabolic intermediate metabolism; pimeloyl-CoA biosynthesis; pimeloyl-CoA from pimelate: step 1/1. In terms of biological role, catalyzes the transformation of pimelate into pimeloyl-CoA with concomitant hydrolysis of ATP to AMP. The sequence is that of 6-carboxyhexanoate--CoA ligase from Alkalihalophilus pseudofirmus (strain ATCC BAA-2126 / JCM 17055 / OF4) (Bacillus pseudofirmus).